A 284-amino-acid polypeptide reads, in one-letter code: Pseudomurein endoisopeptidase PeiW (284 aa).

Pseudomurein-binding repeat stretches follow at residues 4 to 31, 34 to 65, 70 to 100, and 106 to 137; these read GLNEFLDMKKRYEDFKMKNKREPRYVTT, GYKVMLPVFKDMLRRYEDFVRINGREPNYISI, NGKIEIKKFRDMLRRYEDFVRINGREPNIIY, and SDHVSLGTFKDMLRRYKDFVRINGREPNYISI. Residues C198, H233, and D250 contribute to the active site.

Belongs to the Psimunavirus Pseudomurein endoisopeptidase family. Monomer. It depends on Ca(2+) as a cofactor. Mg(2+) serves as cofactor.

In terms of biological role, cysteine protease that cleaves the cell wall of its host methanogen under hydrogen limitation of the latter (autolysis). Cleaves the epsilon-Ala-Lys isopeptide bond in the oligopeptides of pseudomurein. In Methanothermobacter phage psiM100, this protein is Pseudomurein endoisopeptidase PeiW (peiW).